The chain runs to 274 residues: MPSASSPRARLAALAVAALAAAPLAASAQPKAARGRTEVTWYGHAAFVVTTPGGTVLAIDPWLSNPKAPEPGLAGKLPKVDYILVSHGHFDHVGDAVALAKRTGAKLITNFDLGSSLVAAGYPKDQAGMDTLGNIGGTIQAGDAAVTMVTAVHSSGYADDKGTAHPGGNPMGFVIQVKGGPTLYHTGDTDLTQDMKQLPERFGRVDVMLTCIGGHFTMDPKAAAIAVGYVRPRTVVPMHFGTFPAIAGTPEELRAALKGKAEVRVLEPGKPVGF.

It belongs to the UPF0173 family.

The protein is UPF0173 metal-dependent hydrolase A2cp1_1196 of Anaeromyxobacter dehalogenans (strain 2CP-1 / ATCC BAA-258).